Here is a 447-residue protein sequence, read N- to C-terminus: Putative branched-chain amino acid carrier protein SAR1419 (447 aa).

Helical transmembrane passes span 6-26 (WVIG…IFPP), 40-60 (ILAF…VGAL), 74-94 (PKFS…LFAI), 114-134 (SSIA…YICL), 143-163 (IGSL…IKAY), 193-213 (GYLT…VNAV), 229-249 (LTAG…LGYI), 290-310 (LLGI…IVAV), 326-346 (FVLV…NAVI), 350-370 (IPVL…ILIA), 382-402 (IPVI…LGWL), and 417-437 (LEWF…GIFV).

It belongs to the branched chain amino acid transporter family.

It is found in the cell membrane. In terms of biological role, component of the transport system for branched-chain amino acids (leucine, isoleucine and valine), which is coupled to a proton motive force (Potential). Contributes to NaCl tolerance. The protein is Putative branched-chain amino acid carrier protein SAR1419 of Staphylococcus aureus (strain MRSA252).